We begin with the raw amino-acid sequence, 77 residues long: Large ribosomal subunit protein bL28 (77 aa).

Residues 1-25 form a disordered region; the sequence is MARVCQVTGKAPMSGNNVSHANNKT.

This sequence belongs to the bacterial ribosomal protein bL28 family.

This chain is Large ribosomal subunit protein bL28, found in Paraburkholderia phymatum (strain DSM 17167 / CIP 108236 / LMG 21445 / STM815) (Burkholderia phymatum).